The chain runs to 458 residues: Argininosuccinate lyase (458 aa).

It belongs to the lyase 1 family. Argininosuccinate lyase subfamily.

The protein resides in the cytoplasm. It catalyses the reaction 2-(N(omega)-L-arginino)succinate = fumarate + L-arginine. The protein operates within amino-acid biosynthesis; L-arginine biosynthesis; L-arginine from L-ornithine and carbamoyl phosphate: step 3/3. The sequence is that of Argininosuccinate lyase from Bacillus velezensis (strain DSM 23117 / BGSC 10A6 / LMG 26770 / FZB42) (Bacillus amyloliquefaciens subsp. plantarum).